The following is a 177-amino-acid chain: Cytochrome c-type biogenesis protein CcmE (177 aa).

At 1–8 the chain is on the cytoplasmic side; it reads MNPRRKSR. A helical; Signal-anchor for type II membrane protein membrane pass occupies residues 9–29; that stretch reads LKVVMAVLSGLAVAVGLTLYA. Over 30–177 the chain is Periplasmic; sequence LSQNIDLFYT…QISQPFGENK (148 aa). The heme site is built by H131 and Y135. The disordered stretch occupies residues 134–177; that stretch reads NYMPPELGDQMKKQHQPMGISEADLKGKSERDATQISQPFGENK. The span at 156 to 166 shows a compositional bias: basic and acidic residues; the sequence is ADLKGKSERDA. Polar residues predominate over residues 167 to 177; it reads TQISQPFGENK.

This sequence belongs to the CcmE/CycJ family.

It is found in the cell inner membrane. Functionally, heme chaperone required for the biogenesis of c-type cytochromes. Transiently binds heme delivered by CcmC and transfers the heme to apo-cytochromes in a process facilitated by CcmF and CcmH. The polypeptide is Cytochrome c-type biogenesis protein CcmE (Glaesserella parasuis serovar 5 (strain SH0165) (Haemophilus parasuis)).